The chain runs to 325 residues: MSVTRINQQTECPSSVHDLVSCWGGCTQSKTSTDSGLEKRFELNFAQPVDIGTVTVKQLASVMERAGESLRQNSAELGIHTLKFDRSLLVFTAKQIVVRSSVSVMLHEAVHPMLELMRSHNIIVDWASFMRVNYGSPWDMTSETSDIMAHEYAELKSAFPTGHPYLAGPVDRDHCFYFVYDGIDRDPSSCRRENDVQINVYMYNVQADDEYDLDGNTKEQQLLVSHCAGEYETLRVSTYGSTHPFASFETNAVSAASDITKIVNGLLKKFYPERVLLVLLQDRDAQGTTACGVMDRLEGFTVVHRGANHFGGGYVFHQATYARSA.

Belongs to the eukaryotic AdoMetDC family. Forms a heterodimer with S-adenosylmethionine decarboxylase AdoMetDC; heterodimerization is required to activate AdoMetDC.

The protein operates within amine and polyamine biosynthesis; S-adenosylmethioninamine biosynthesis; S-adenosylmethioninamine from S-adenosyl-L-methionine: step 1/1. Its function is as follows. Probably has no catalytic activity due to the loss of several residues required for processing and catalysis. Forms a complex with S-adenosylmethionine decarboxylase AdoMetDC which is essential to activate AdoMetDC. Required for the biosynthesis of the polyamine spermidine. Required for growth and survival during the bloodstream life cycle stage. The chain is Inactive S-adenosylmethionine decarboxylase prozyme from Trypanosoma brucei brucei.